Here is a 118-residue protein sequence, read N- to C-terminus: MKNKYIEQFEAKQIEGKNVPDFRAGDTLKLAIRIKEGDKTRIQNFEGICIARRGNGVSETFIVRKMGANNVGVERIFPIYSESLESIAVLRRGRVRRARLFYLRDRRGKAARIKELKK.

It belongs to the bacterial ribosomal protein bL19 family.

This protein is located at the 30S-50S ribosomal subunit interface and may play a role in the structure and function of the aminoacyl-tRNA binding site. The sequence is that of Large ribosomal subunit protein bL19 from Campylobacter jejuni subsp. doylei (strain ATCC BAA-1458 / RM4099 / 269.97).